The following is a 312-amino-acid chain: Homoserine O-acetyltransferase (312 aa).

The active-site Acyl-thioester intermediate is the C142. Residues K163 and S192 each contribute to the substrate site. The active-site Proton acceptor is the H235. Residue E237 is part of the active site. Substrate is bound at residue R249.

It belongs to the MetA family.

The protein resides in the cytoplasm. The enzyme catalyses L-homoserine + acetyl-CoA = O-acetyl-L-homoserine + CoA. It participates in amino-acid biosynthesis; L-methionine biosynthesis via de novo pathway; O-acetyl-L-homoserine from L-homoserine: step 1/1. Functionally, transfers an acetyl group from acetyl-CoA to L-homoserine, forming acetyl-L-homoserine. The sequence is that of Homoserine O-acetyltransferase from Ruegeria pomeroyi (strain ATCC 700808 / DSM 15171 / DSS-3) (Silicibacter pomeroyi).